Here is a 227-residue protein sequence, read N- to C-terminus: Cytochrome c oxidase subunit 2 (227 aa).

Over 1 to 14 (MAYPFQLGLQDATS) the chain is Mitochondrial intermembrane. The helical transmembrane segment at 15–45 (PIMEELTNFHDHTLMIVFLISSLVLYIISLM) threads the bilayer. Over 46 to 59 (LTTKLTHTSTMDAQ) the chain is Mitochondrial matrix. Residues 60-87 (EVETIWTILPAVILILIALPSLRILYMM) traverse the membrane as a helical segment. The Mitochondrial intermembrane segment spans residues 88 to 227 (DEINNPVLTV…HFENWSTSMI (140 aa)). Residues His-161, Cys-196, Glu-198, Cys-200, His-204, and Met-207 each coordinate Cu cation. Position 198 (Glu-198) interacts with Mg(2+).

This sequence belongs to the cytochrome c oxidase subunit 2 family. In terms of assembly, component of the cytochrome c oxidase (complex IV, CIV), a multisubunit enzyme composed of 14 subunits. The complex is composed of a catalytic core of 3 subunits MT-CO1, MT-CO2 and MT-CO3, encoded in the mitochondrial DNA, and 11 supernumerary subunits COX4I, COX5A, COX5B, COX6A, COX6B, COX6C, COX7A, COX7B, COX7C, COX8 and NDUFA4, which are encoded in the nuclear genome. The complex exists as a monomer or a dimer and forms supercomplexes (SCs) in the inner mitochondrial membrane with NADH-ubiquinone oxidoreductase (complex I, CI) and ubiquinol-cytochrome c oxidoreductase (cytochrome b-c1 complex, complex III, CIII), resulting in different assemblies (supercomplex SCI(1)III(2)IV(1) and megacomplex MCI(2)III(2)IV(2)). Found in a complex with TMEM177, COA6, COX18, COX20, SCO1 and SCO2. Interacts with TMEM177 in a COX20-dependent manner. Interacts with COX20. Interacts with COX16. Requires Cu cation as cofactor.

It is found in the mitochondrion inner membrane. The enzyme catalyses 4 Fe(II)-[cytochrome c] + O2 + 8 H(+)(in) = 4 Fe(III)-[cytochrome c] + 2 H2O + 4 H(+)(out). Component of the cytochrome c oxidase, the last enzyme in the mitochondrial electron transport chain which drives oxidative phosphorylation. The respiratory chain contains 3 multisubunit complexes succinate dehydrogenase (complex II, CII), ubiquinol-cytochrome c oxidoreductase (cytochrome b-c1 complex, complex III, CIII) and cytochrome c oxidase (complex IV, CIV), that cooperate to transfer electrons derived from NADH and succinate to molecular oxygen, creating an electrochemical gradient over the inner membrane that drives transmembrane transport and the ATP synthase. Cytochrome c oxidase is the component of the respiratory chain that catalyzes the reduction of oxygen to water. Electrons originating from reduced cytochrome c in the intermembrane space (IMS) are transferred via the dinuclear copper A center (CU(A)) of subunit 2 and heme A of subunit 1 to the active site in subunit 1, a binuclear center (BNC) formed by heme A3 and copper B (CU(B)). The BNC reduces molecular oxygen to 2 water molecules using 4 electrons from cytochrome c in the IMS and 4 protons from the mitochondrial matrix. In Praomys taitae (Taita hill rat), this protein is Cytochrome c oxidase subunit 2 (MT-CO2).